The sequence spans 575 residues: Serine/threonine-protein phosphatase 2A regulatory subunit B'' subunit beta (575 aa).

The disordered stretch occupies residues 41-131 (APGRDQPTPG…SQSIPTFYFP (91 aa)). The EF-hand domain maps to 388-423 (KTPTSIEYWFRCMDLDGDGALSMFELEYFYEEQCRR). Ca(2+) contacts are provided by aspartate 401, aspartate 403, aspartate 405, and glutamate 412.

In terms of assembly, PP2A consists of a common heterodimeric core enzyme, composed of a 36 kDa catalytic subunit (subunit C) and a 65 kDa constant regulatory subunit (PR65 or subunit A), that associates with a variety of regulatory subunits. Proteins that associate with the core dimer include three families of regulatory subunits B (the R2/B/PR55/B55, R3/B''/PR72/PR130/PR59 and R5/B'/B56 families), the 48 kDa variable regulatory subunit, viral proteins, and cell signaling molecules. Interacts with N-terminal region of CDC6. Interacts with NOD2.

It is found in the nucleus. Functionally, the B regulatory subunit might modulate substrate selectivity and catalytic activity, and might also direct the localization of the catalytic enzyme to a particular subcellular compartment. In Homo sapiens (Human), this protein is Serine/threonine-protein phosphatase 2A regulatory subunit B'' subunit beta (PPP2R3B).